A 355-amino-acid polypeptide reads, in one-letter code: UDP-galactose translocator 1 (355 aa).

The disordered stretch occupies residues methionine 1–arginine 36. The span at serine 9–glutamate 30 shows a compositional bias: basic and acidic residues. Helical transmembrane passes span valine 40–isoleucine 60, tryptophan 177–alanine 197, isoleucine 211–phenylalanine 231, valine 282–tyrosine 302, serine 309–aspartate 329, and isoleucine 330–tyrosine 350.

The protein belongs to the nucleotide-sugar transporter family. SLC35A subfamily.

It is found in the membrane. The protein resides in the cytoplasmic granule membrane. The protein is UDP-galactose translocator 1 (ugtp-1) of Caenorhabditis elegans.